A 460-amino-acid chain; its full sequence is MLLSFYFNGLLLVGCLLSWGRSDTEGQCHSFTDLNIHNSIIGTALKVQLLLYTPENPKCAQDLNEDNSTGFQYLNVTRKTVFITHGYRPTGSPPVWIDNIVTKFLDIQDFNVILVDWNRGATTVLYHNAAAKTRKVADILKRLIDNMLSQGATLDSIYMVGVSLGAHISGFVGKMYNGSIGRITGLDPAGPLFNGKPPEERLHYTDAQFVDVVHTDTDGLGYKESLGHIDFYPNGGTDQPGCPKTILSGSEYFKCDHQRSVFLYIASLTNNGDLVGFPCKSYRDYRIGNCTNCKEFLPLSCPVFGFYADKWKDHLVKKNPPGTKAFFDTAAKDPFCIFHYYLDIMTWSSQTRRGYITIRLMSLNGNVTESKLDKDHATFEQYKEVSLLAKFDQDLDPMTRISVTFTTGSVIGPKFKLRVLRMRLRPLTNTNRPILCRYDFVLLENVEMEFNPIPCEDTNL.

Positions 1 to 26 (MLLSFYFNGLLLVGCLLSWGRSDTEG) are cleaved as a signal peptide. N-linked (GlcNAc...) asparagine glycans are attached at residues Asn67 and Asn75. Ser163 serves as the catalytic Nucleophile. The N-linked (GlcNAc...) asparagine glycan is linked to Asn177. The active-site Charge relay system is the Asp187. The cysteines at positions 242 and 255 are disulfide-linked. Catalysis depends on His257, which acts as the Charge relay system. 2 cysteine pairs are disulfide-bonded: Cys279–Cys290 and Cys293–Cys301. The N-linked (GlcNAc...) asparagine glycan is linked to Asn289. A glycan (N-linked (GlcNAc...) asparagine) is linked at Asn366. Cys436 and Cys455 are oxidised to a cystine.

The protein belongs to the AB hydrolase superfamily. Lipase family.

The protein resides in the secreted. It localises to the cell membrane. The enzyme catalyses 1-hexadecanoyl-2-(9Z-octadecenoyl)-sn-glycero-3-phosphate + H2O = 2-(9Z-octadecenoyl)-sn-glycero-3-phosphate + hexadecanoate + H(+). In terms of biological role, hydrolyzes specifically phosphatidic acid (PA) to produce 2-acyl lysophosphatidic acid (LPA; a potent bioactive lipid mediator) and fatty acid. Does not hydrolyze other phospholipids, like phosphatidylserine (PS), phosphatidylcholine (PC) and phosphatidylethanolamine (PE) or triacylglycerol (TG). This Xenopus laevis (African clawed frog) protein is Lipase member H-B (liph-b).